A 288-amino-acid chain; its full sequence is Short chain aldehyde dehydrogenase 1 (288 aa).

NAD(+) is bound by residues 26–28 (SGI), D47, 72–73 (DV), and 99–101 (NAG). S153 serves as the catalytic Proton donor. Residues S153 and Y166 each contribute to the substrate site. NAD(+) is bound by residues Y166, K170, and T201. Y166 serves as the catalytic Proton acceptor. Residue K170 is the Proton donor/acceptor of the active site.

It belongs to the short-chain dehydrogenases/reductases (SDR) family. In terms of assembly, homodimer. Expressed in mature seeds.

It carries out the reaction 4,5,8-trihydroxycasbene + 2 NAD(+) = jolkinol C + 2 NADH + 2 H(+). It catalyses the reaction a secondary alcohol + NAD(+) = a ketone + NADH + H(+). The enzyme catalyses a primary alcohol + NAD(+) = an aldehyde + NADH + H(+). Its pathway is secondary metabolite biosynthesis; terpenoid biosynthesis. Its function is as follows. Involved in the biosynthesis of macrocyclic lathyrane type diterpenoids (also called Euphorbia factors) natural products, including the cyclization route from casbene to jolkinol C, a precursor for ingenol mebutate that is used to treat actinic keratosis, a precancerous skin condition. Catalyzes the conversion of 4,5,8-trihydroxycasbene into jolkinol C in presence of NAD. Also mediates the formation of casbene dione derivative and 4-ketocasbene from 4-hydroxy-8-ketocasbene and 4-hydroxycasbene, respectively. Together with CYP71D445, triggers the biosynthesis of 8-ketocasbene from 8-hydroxycasbene. This is Short chain aldehyde dehydrogenase 1 from Euphorbia lathyris (Caper spurge).